A 202-amino-acid chain; its full sequence is LexA repressor (202 aa).

A DNA-binding region (H-T-H motif) is located at residues 28–48 (RAEIAQRLGFRSPNAAEEHLK). Active-site for autocatalytic cleavage activity residues include Ser-119 and Lys-156.

It belongs to the peptidase S24 family. In terms of assembly, homodimer.

The catalysed reaction is Hydrolysis of Ala-|-Gly bond in repressor LexA.. Functionally, represses a number of genes involved in the response to DNA damage (SOS response), including recA and lexA. Binds to the 16 bp palindromic sequence 5'-CTGTATATATATACAG-3'. In the presence of single-stranded DNA, RecA interacts with LexA causing an autocatalytic cleavage which disrupts the DNA-binding part of LexA, leading to derepression of the SOS regulon and eventually DNA repair. This Citrobacter koseri (strain ATCC BAA-895 / CDC 4225-83 / SGSC4696) protein is LexA repressor.